A 290-amino-acid polypeptide reads, in one-letter code: 4-hydroxybenzoate octaprenyltransferase (290 aa).

8 helical membrane passes run 21–41 (IGTL…VKGM), 44–64 (LSIL…GCVI), 84–104 (LATG…LVFC), 106–126 (FILV…AVFL), 142–162 (LFLG…SIEA), 212–232 (IISL…YLSQ), 235–255 (TSYF…CKLI), and 267–287 (FLNN…GIFF).

This sequence belongs to the UbiA prenyltransferase family. Mg(2+) is required as a cofactor.

It is found in the cell inner membrane. The enzyme catalyses all-trans-octaprenyl diphosphate + 4-hydroxybenzoate = 4-hydroxy-3-(all-trans-octaprenyl)benzoate + diphosphate. Its pathway is cofactor biosynthesis; ubiquinone biosynthesis. Catalyzes the prenylation of para-hydroxybenzoate (PHB) with an all-trans polyprenyl group. Mediates the second step in the final reaction sequence of ubiquinone-8 (UQ-8) biosynthesis, which is the condensation of the polyisoprenoid side chain with PHB, generating the first membrane-bound Q intermediate 3-octaprenyl-4-hydroxybenzoate. This chain is 4-hydroxybenzoate octaprenyltransferase, found in Pasteurella multocida (strain Pm70).